A 234-amino-acid chain; its full sequence is MRKPDSKIVLLGDMNVGKTSLLQRYMERRFPDTVSTVGGAFYLKQWRSYNISIWDTAGREQFHGLGSMYCRGAAAIILTYDVNHRQSLVELEDRFLGLTDTASKDCLFAIVGNKVDLTEEGALAGQEKEECSPNMDAGDRVSPRAPKQVQLEDAVALYKKILKYKMLDEQDVPAAEQMCFETSAKTGYNVDLLFETLFDLVVPMILQQRAERPSHTVDISSHKPPKRTRSGCCA.

GTP-binding residues include Gly-17, Lys-18, Thr-19, Asp-32, and Thr-36. Residue Thr-19 coordinates Mg(2+). 2 consecutive short sequence motifs (switch) follow at residues Arg-28–Phe-41 and Asp-55–Gly-72. Mg(2+) is bound by residues Thr-36 and Asp-55. 4 residues coordinate GTP: Gly-58, Asn-113, Lys-114, and Asp-116. Residues Gly-125–Arg-144 are disordered. A compositionally biased stretch (basic and acidic residues) spans Gln-126–Ser-142. Positions 184 and 185 each coordinate GTP. A disordered region spans residues Arg-212–Ala-234. A compositionally biased stretch (basic residues) spans Lys-223–Ala-234. Residues Cys-232 and Cys-233 are each lipidated (S-geranylgeranyl cysteine).

This sequence belongs to the small GTPase superfamily. Rab family. Mg(2+) serves as cofactor. As to expression, low or absent expression in normal pancreas and stronger expression in 15 of 18 exocrine pancreatic adenocarcinomas (at protein level).

It localises to the golgi apparatus. The protein localises to the cytoplasmic vesicle. The protein resides in the phagosome. It is found in the phagosome membrane. The enzyme catalyses GTP + H2O = GDP + phosphate + H(+). With respect to regulation, regulated by guanine nucleotide exchange factors (GEFs) which promote the exchange of bound GDP for free GTP. Regulated by GTPase activating proteins (GAPs) which increase the GTP hydrolysis activity. Inhibited by GDP dissociation inhibitors (GDIs). Its function is as follows. The small GTPases Rab are key regulators of intracellular membrane trafficking, from the formation of transport vesicles to their fusion with membranes. Rabs cycle between an inactive GDP-bound form and an active GTP-bound form that is able to recruit to membranes different sets of downstream effectors directly responsible for vesicle formation, movement, tethering and fusion. RAB20 plays a role in apical endocytosis/recycling. Plays a role in the maturation and acidification of phagosomes that engulf pathogens, such as S.aureus and M.tuberculosis. Plays a role in the fusion of phagosomes with lysosomes. The polypeptide is Ras-related protein Rab-20 (Homo sapiens (Human)).